A 336-amino-acid chain; its full sequence is Inositol 2-dehydrogenase (336 aa).

The protein belongs to the Gfo/Idh/MocA family. Homotetramer.

The enzyme catalyses myo-inositol + NAD(+) = scyllo-inosose + NADH + H(+). Functionally, involved in the oxidation of myo-inositol (MI) to 2-keto-myo-inositol (2KMI or 2-inosose). The sequence is that of Inositol 2-dehydrogenase from Pseudomonas syringae pv. syringae (strain B728a).